A 137-amino-acid polypeptide reads, in one-letter code: Putative pre-16S rRNA nuclease (137 aa).

The protein belongs to the YqgF nuclease family.

It is found in the cytoplasm. Functionally, could be a nuclease involved in processing of the 5'-end of pre-16S rRNA. This chain is Putative pre-16S rRNA nuclease, found in Clostridium botulinum (strain 657 / Type Ba4).